The primary structure comprises 128 residues: L-ectoine synthase (128 aa).

It belongs to the ectoine synthase family.

The enzyme catalyses (2S)-4-acetamido-2-aminobutanoate = L-ectoine + H2O. It participates in amine and polyamine biosynthesis; ectoine biosynthesis; L-ectoine from L-aspartate 4-semialdehyde: step 3/3. In terms of biological role, catalyzes the circularization of gamma-N-acetyl-alpha,gamma-diaminobutyric acid (ADABA) to ectoine (1,4,5,6-tetrahydro-2-methyl-4-pyrimidine carboxylic acid), which is an excellent osmoprotectant. This Vibrio campbellii (strain ATCC BAA-1116) protein is L-ectoine synthase.